A 232-amino-acid chain; its full sequence is MRLPPLTKMQFVHRPNRFVVELKRTDTEENVLAHLPDPGRLRELLVEGAIIWAEPAVDPLRKTAWTAVLCETPGGDLVSLKTTFANQLVEEALASQSLEAFSGWQLEKREATIGQSRFDFLLSKNGRTLVLEVKSVTLARGSKGFFPDAVTKRGAKHVRELTALNLLPEYESAVLFVSQHSNISTVEMESSIDADFAKAIKEANDKGVFISAVSTELSKQNICLKNRIPVVV.

Belongs to the SfsA family.

The polypeptide is Sugar fermentation stimulation protein homolog (Shouchella clausii (strain KSM-K16) (Alkalihalobacillus clausii)).